A 118-amino-acid chain; its full sequence is REPTOR-binding partner (118 aa).

Residues 1-20 (MADMEIQSNKMSITEETQVQ) show a composition bias toward polar residues. A disordered region spans residues 1–53 (MADMEIQSNKMSITEETQVQTRKECGKRGRKPGRKTSTEKLDMKAKLERSRQS). Over residues 36-53 (TSTEKLDMKAKLERSRQS) the composition is skewed to basic and acidic residues. Residues 40–77 (KLDMKAKLERSRQSARECRARKKLRYQYLEELVADREK) are basic motif. The region spanning 40–90 (KLDMKAKLERSRQSARECRARKKLRYQYLEELVADREKAVVALRTELERLI) is the bZIP domain. The leucine-zipper stretch occupies residues 82 to 89 (LRTELERL).

The protein belongs to the bZIP family. ATF subfamily. In terms of assembly, homodimer. Interacts (via C-terminus) with REPTOR (via C-terminus).

Its subcellular location is the nucleus. The protein localises to the chromosome. Its function is as follows. Transcriptional regulator that acts in the TORC1 signaling pathway to regulate energy homeostasis and promote survival during nutrient deprivation. Interacts with REPTOR to form a transcriptional activator complex that functions downstream of TORC1 to up-regulate the expression of most target genes induced by TORC1 inhibition. In the complex, acts to enhance the binding of the transcriptional activator REPTOR to the regulatory sequences of target genes. Under normal conditions TORC1 is active, inhibiting the formation of the REPTOR/REPTOR-BP complex by phosphorylating REPTOR and mediates its cytoplasmic retention by forming a docking site for 14-3-3 proteins. Upon TORC1 inhibition resulting from nutrient stress, REPTOR is recruited into the nucleus where it interacts with REPTOR-BP and together they maintain organismal metabolism by activating the expression of target stress response genes including those involved in glycogenesis and triglyceride biosynthesis. The complex also appears to negatively regulate some aspects of TORC1-dependent larval growth. This is REPTOR-binding partner from Drosophila melanogaster (Fruit fly).